The following is a 396-amino-acid chain: Subtilisin-like protease 5 (396 aa).

The signal sequence occupies residues 1–20 (MTGFLTILSLSLAALSVTNA). Residues 21 to 116 (AQILSVPQGA…VEPDAIIKQH (96 aa)) constitute a propeptide that is removed on maturation. In terms of domain architecture, Inhibitor I9 spans 37–114 (YIVVMKDDTS…AFVEPDAIIK (78 aa)). One can recognise a Peptidase S8 domain in the interval 125 to 396 (PWGLSRLSNR…SRLLYNGSGR (272 aa)). Catalysis depends on charge relay system residues Asp156 and His187. 2 N-linked (GlcNAc...) asparagine glycosylation sites follow: Asn230 and Asn248. The Charge relay system role is filled by Ser342. The tract at residues 376-396 (PTIRNPGPDTTSRLLYNGSGR) is disordered. Asn392 carries an N-linked (GlcNAc...) asparagine glycan.

This sequence belongs to the peptidase S8 family.

Its subcellular location is the secreted. Functionally, secreted subtilisin-like serine protease with keratinolytic activity that contributes to pathogenicity. The polypeptide is Subtilisin-like protease 5 (SUB5) (Arthroderma gypseum (strain ATCC MYA-4604 / CBS 118893) (Microsporum gypseum)).